We begin with the raw amino-acid sequence, 626 residues long: DNA topoisomerase 4 subunit A (626 aa).

Residues 24-439 (IASVVDGFKP…RGYSINFIDL (416 aa)) enclose the Topo IIA-type catalytic domain. The active-site O-(5'-phospho-DNA)-tyrosine intermediate is the Tyr-105.

This sequence belongs to the type II topoisomerase GyrA/ParC subunit family. As to quaternary structure, heterotetramer composed of ParC and ParE.

Its subcellular location is the cell membrane. It carries out the reaction ATP-dependent breakage, passage and rejoining of double-stranded DNA.. Topoisomerase IV is essential for chromosome segregation. It relaxes supercoiled DNA. Performs the decatenation events required during the replication of a circular DNA molecule. The chain is DNA topoisomerase 4 subunit A (parC) from Borreliella burgdorferi (strain ATCC 35210 / DSM 4680 / CIP 102532 / B31) (Borrelia burgdorferi).